The following is a 122-amino-acid chain: Large ribosomal subunit protein uL14 (122 aa).

It belongs to the universal ribosomal protein uL14 family. Part of the 50S ribosomal subunit. Forms a cluster with proteins L3 and L19. In the 70S ribosome, L14 and L19 interact and together make contacts with the 16S rRNA in bridges B5 and B8.

Binds to 23S rRNA. Forms part of two intersubunit bridges in the 70S ribosome. In Hydrogenovibrio crunogenus (strain DSM 25203 / XCL-2) (Thiomicrospira crunogena), this protein is Large ribosomal subunit protein uL14.